The sequence spans 310 residues: Cytochrome f (310 aa).

Residues 1 to 23 form the signal peptide; that stretch reads MRRLIPILLGSLVLSLSILVAPA. 4 residues coordinate heme: tyrosine 28, cysteine 48, cysteine 51, and histidine 52. Residues 277-297 traverse the membrane as a helical segment; it reads IYGLLAFFVAVSLAQILLVLK.

It belongs to the cytochrome f family. In terms of assembly, the 4 large subunits of the cytochrome b6-f complex are cytochrome b6, subunit IV (17 kDa polypeptide, PetD), cytochrome f and the Rieske protein, while the 4 small subunits are PetG, PetL, PetM and PetN. The complex functions as a dimer. Heme serves as cofactor.

The protein resides in the cellular thylakoid membrane. Its function is as follows. Component of the cytochrome b6-f complex, which mediates electron transfer between photosystem II (PSII) and photosystem I (PSI), cyclic electron flow around PSI, and state transitions. This Prochlorococcus marinus (strain MIT 9313) protein is Cytochrome f.